The following is a 297-amino-acid chain: MARSDEDTWDLASSVGATATMVAAARAVASRGPDTLIDDPYADALVRAVGVEYFVKLLDGEITLEADNAAMLAVMTDVMAVRTRFFDDFFLSSGLPQAVILASGLDARTYRLPWPSGSVVYEIDQPEVIEFKTRTLADLGASPAAELRTVAIDLRDDWPRALRDRGFDPTAPTAWIAEGLLIYLPPDAQDRLFDNITALSAPGSRLATEFHPDAGARIGASSQRMAEEWRRHGLDLDMADLFYDGERNPVVDYLRERGWEVEARSRPDMFAHYGRPFPTGEAVEALRQSLAVTATRR.

S-adenosyl-L-methionine-binding positions include D124 and 153 to 154 (DL).

Belongs to the UPF0677 family.

Exhibits S-adenosyl-L-methionine-dependent methyltransferase activity. The sequence is that of Putative S-adenosyl-L-methionine-dependent methyltransferase Mmcs_1044 from Mycobacterium sp. (strain MCS).